The sequence spans 378 residues: Cytochrome b (378 aa).

4 helical membrane passes run 34 to 54 (FGSL…FLAM), 78 to 99 (WLLR…YLHV), 114 to 134 (WLIG…GYVL), and 179 to 199 (FFTF…IHLL). The heme b site is built by His84 and His98. Heme b-binding residues include His183 and His197. Residue His202 participates in a ubiquinone binding. 4 consecutive transmembrane segments (helical) span residues 227–247 (FKDI…VLIS), 289–309 (LGGV…PFYN), 321–341 (INQV…WIGA), and 348–368 (YVLI…VNPL).

Belongs to the cytochrome b family. The main subunits of complex b-c1 are: cytochrome b, cytochrome c1 and the Rieske protein. Heme b serves as cofactor.

The protein resides in the mitochondrion inner membrane. Component of the ubiquinol-cytochrome c reductase complex (complex III or cytochrome b-c1 complex) that is part of the mitochondrial respiratory chain. The b-c1 complex mediates electron transfer from ubiquinol to cytochrome c. Contributes to the generation of a proton gradient across the mitochondrial membrane that is then used for ATP synthesis. This chain is Cytochrome b (mt:Cyt-b), found in Drosophila mauritiana (Fruit fly).